A 271-amino-acid chain; its full sequence is Glutamate racemase (271 aa).

Residues 13–14 (DS) and 45–46 (YG) each bind substrate. The active-site Proton donor/acceptor is Cys77. Substrate is bound at residue 78–79 (NT). Residue Cys192 is the Proton donor/acceptor of the active site. Residue 193–194 (TH) participates in substrate binding.

Belongs to the aspartate/glutamate racemases family.

It catalyses the reaction L-glutamate = D-glutamate. It functions in the pathway cell wall biogenesis; peptidoglycan biosynthesis. Its function is as follows. Provides the (R)-glutamate required for cell wall biosynthesis. This chain is Glutamate racemase, found in Sinorhizobium medicae (strain WSM419) (Ensifer medicae).